A 210-amino-acid polypeptide reads, in one-letter code: N-(5'-phosphoribosyl)anthranilate isomerase (210 aa).

The protein belongs to the TrpF family.

The catalysed reaction is N-(5-phospho-beta-D-ribosyl)anthranilate = 1-(2-carboxyphenylamino)-1-deoxy-D-ribulose 5-phosphate. Its pathway is amino-acid biosynthesis; L-tryptophan biosynthesis; L-tryptophan from chorismate: step 3/5. In Magnetococcus marinus (strain ATCC BAA-1437 / JCM 17883 / MC-1), this protein is N-(5'-phosphoribosyl)anthranilate isomerase.